Consider the following 149-residue polypeptide: Large ribosomal subunit protein uL13 (149 aa).

The protein belongs to the universal ribosomal protein uL13 family. As to quaternary structure, part of the 50S ribosomal subunit.

Its function is as follows. This protein is one of the early assembly proteins of the 50S ribosomal subunit, although it is not seen to bind rRNA by itself. It is important during the early stages of 50S assembly. The polypeptide is Large ribosomal subunit protein uL13 (Chlorobium phaeobacteroides (strain DSM 266 / SMG 266 / 2430)).